We begin with the raw amino-acid sequence, 513 residues long: Activin receptor type-2A (513 aa).

The signal sequence occupies residues 1–19 (MGAAAKLAFAVFLISCSSG). At 20 to 135 (AILGRSETQE…TSNPVTPKPP (116 aa)) the chain is on the extracellular side. Disulfide bonds link Cys30–Cys60, Cys50–Cys78, Cys85–Cys104, Cys91–Cys103, and Cys105–Cys110. N-linked (GlcNAc...) asparagine glycans are attached at residues Asn43 and Asn66. A helical membrane pass occupies residues 136–161 (YYNILLYSLVPLMLIAGIVICAFWVY). Over 162–513 (RHHKMAYPPV…VDFPPKESSL (352 aa)) the chain is Cytoplasmic. The region spanning 192–485 (LQLLEVKARG…GERITQMQRL (294 aa)) is the Protein kinase domain. Residues 198–206 (KARGRFGCV) and Lys219 contribute to the ATP site. The Proton acceptor role is filled by Asp322.

This sequence belongs to the protein kinase superfamily. TKL Ser/Thr protein kinase family. TGFB receptor subfamily. In terms of assembly, part of a complex consisting of MAGI2/ARIP1, ACVR2A, ACVR1B and SMAD3. Interacts with MAGI2/ARIP1. Interacts with type I receptor ACVR1. Interacts with BMP7. Interacts with TSC22D1/TSC-22. Interacts with activin A/INHBA. The cofactor is Mg(2+). It depends on Mn(2+) as a cofactor. In terms of tissue distribution, brain, testis, intestine, liver and kidney.

The protein resides in the cell membrane. It catalyses the reaction L-threonyl-[receptor-protein] + ATP = O-phospho-L-threonyl-[receptor-protein] + ADP + H(+). It carries out the reaction L-seryl-[receptor-protein] + ATP = O-phospho-L-seryl-[receptor-protein] + ADP + H(+). In terms of biological role, on ligand binding, forms a receptor complex consisting of two type II and two type I transmembrane serine/threonine kinases. Type II receptors phosphorylate and activate type I receptors which autophosphorylate, then bind and activate SMAD transcriptional regulators. Receptor for activin A, activin B and inhibin A. Mediates induction of adipogenesis by GDF6. The protein is Activin receptor type-2A of Mus musculus (Mouse).